Reading from the N-terminus, the 306-residue chain is Pyridoxal 5'-phosphate synthase subunit PdxS (306 aa).

Asp-36 is a binding site for D-ribose 5-phosphate. Lys-93 functions as the Schiff-base intermediate with D-ribose 5-phosphate in the catalytic mechanism. Gly-165 contributes to the D-ribose 5-phosphate binding site. Arg-177 provides a ligand contact to D-glyceraldehyde 3-phosphate. Residues Gly-226 and 247-248 (GS) contribute to the D-ribose 5-phosphate site.

Belongs to the PdxS/SNZ family. As to quaternary structure, in the presence of PdxT, forms a dodecamer of heterodimers.

It carries out the reaction aldehydo-D-ribose 5-phosphate + D-glyceraldehyde 3-phosphate + L-glutamine = pyridoxal 5'-phosphate + L-glutamate + phosphate + 3 H2O + H(+). Its pathway is cofactor biosynthesis; pyridoxal 5'-phosphate biosynthesis. Catalyzes the formation of pyridoxal 5'-phosphate from ribose 5-phosphate (RBP), glyceraldehyde 3-phosphate (G3P) and ammonia. The ammonia is provided by the PdxT subunit. Can also use ribulose 5-phosphate and dihydroxyacetone phosphate as substrates, resulting from enzyme-catalyzed isomerization of RBP and G3P, respectively. This chain is Pyridoxal 5'-phosphate synthase subunit PdxS, found in Salinispora tropica (strain ATCC BAA-916 / DSM 44818 / JCM 13857 / NBRC 105044 / CNB-440).